The chain runs to 235 residues: NifU-like protein 2, chloroplastic (235 aa).

Residues 1 to 16 (MQLLTLNPAAISRTPP) constitute a chloroplast transit peptide.

The protein belongs to the NifU family. As to quaternary structure, homodimer; disulfide-linked. [2Fe-2S] cluster serves as cofactor. Predominantly expressed in leaves and floral stalks. Ubiquitous (at protein level).

Its subcellular location is the plastid. The protein localises to the chloroplast stroma. In terms of biological role, molecular scaffold for [Fe-S] cluster assembly of chloroplastic iron-sulfur proteins. Required for biogenesis of ferredoxin, a major photosynthetic electron carrier containing [2Fe-2S] cluster. Required for the assembly of photosystem I complex. The protein is NifU-like protein 2, chloroplastic (NIFU2) of Arabidopsis thaliana (Mouse-ear cress).